The primary structure comprises 301 residues: uncharacterized protein (301 aa).

A signal peptide spans 1-22 (MPGRFTVALVIALGGTCGVADA). The GP-PDE domain maps to 31 to 300 (PMIVAHRAGT…DSPLAAQQWR (270 aa)).

This is an uncharacterized protein from Mycobacterium tuberculosis (strain ATCC 25618 / H37Rv).